The following is a 446-amino-acid chain: Tubulin beta-6 chain (446 aa).

Residues 1 to 4 carry the MREI motif motif; that stretch reads MREI. GTP-binding residues include Gln-11, Glu-69, Ser-138, Gly-142, Thr-143, and Gly-144. Glu-69 lines the Mg(2+) pocket. The residue at position 172 (Ser-172) is a Phosphoserine; by CDK1. Residues Asn-204 and Asn-226 each contribute to the GTP site. Residue Glu-438 is modified to 5-glutamyl polyglutamate.

This sequence belongs to the tubulin family. Dimer of alpha and beta chains. A typical microtubule is a hollow water-filled tube with an outer diameter of 25 nm and an inner diameter of 15 nM. Alpha-beta heterodimers associate head-to-tail to form protofilaments running lengthwise along the microtubule wall with the beta-tubulin subunit facing the microtubule plus end conferring a structural polarity. Microtubules usually have 13 protofilaments but different protofilament numbers can be found in some organisms and specialized cells. The cofactor is Mg(2+). Post-translationally, some glutamate residues at the C-terminus are polyglycylated, resulting in polyglycine chains on the gamma-carboxyl group. Glycylation is mainly limited to tubulin incorporated into axonemes (cilia and flagella) whereas glutamylation is prevalent in neuronal cells, centrioles, axonemes, and the mitotic spindle. Both modifications can coexist on the same protein on adjacent residues, and lowering polyglycylation levels increases polyglutamylation, and reciprocally. Cilia and flagella glycylation is required for their stability and maintenance. Flagella glycylation controls sperm motility. Some glutamate residues at the C-terminus are polyglutamylated, resulting in polyglutamate chains on the gamma-carboxyl group. Polyglutamylation plays a key role in microtubule severing by spastin (SPAST). SPAST preferentially recognizes and acts on microtubules decorated with short polyglutamate tails: severing activity by SPAST increases as the number of glutamates per tubulin rises from one to eight, but decreases beyond this glutamylation threshold. Glutamylation is also involved in cilia motility. In terms of processing, phosphorylated on Ser-172 by CDK1 during the cell cycle, from metaphase to telophase, but not in interphase. This phosphorylation inhibits tubulin incorporation into microtubules.

It is found in the cytoplasm. The protein localises to the cytoskeleton. Functionally, tubulin is the major constituent of microtubules, a cylinder consisting of laterally associated linear protofilaments composed of alpha- and beta-tubulin heterodimers. Microtubules grow by the addition of GTP-tubulin dimers to the microtubule end, where a stabilizing cap forms. Below the cap, tubulin dimers are in GDP-bound state, owing to GTPase activity of alpha-tubulin. The sequence is that of Tubulin beta-6 chain (TUBB6) from Bos taurus (Bovine).